The following is a 150-amino-acid chain: Ribosome maturation factor RimP (150 aa).

It belongs to the RimP family.

Its subcellular location is the cytoplasm. Required for maturation of 30S ribosomal subunits. This Methylococcus capsulatus (strain ATCC 33009 / NCIMB 11132 / Bath) protein is Ribosome maturation factor RimP.